A 650-amino-acid polypeptide reads, in one-letter code: MGKIIGIDLGTTNSCVAIMEGNQVKVIENSEGARTTPSIIAYMDDNEVLVGAPAKRQSVTNPKNTLFAVKRLIGRRFEEKEVQKDIGLMPYAIIKADNGDAWVEAHGEKLAPPQISAEVLRKMKKTAEDYLGEPVTEAVITVPAYFNDSQRQATKDAGRIAGLEVKRIINEPTAAALAFGLDKAEKGDRKIAVYDLGGGTFDVSIIEIADVDGEMQFEVLSTNGDTFLGGEDFDQRIIDYIIGEFKKEQGVDLSKDVLALQRLKEAAEKAKIELSSSQQTEINLPYITADASGPKHLNLKITRAKLEALVEDLVERTIEPCRIAIKDAGVKVSDIDDVILVGGQTRMPKVQEKVKEFFGKEPRRDVNPDEAVAVGAAIQGQVLSGDRKDVLLLDVTPLSLGIETLGGVMTKMITKNTTIPTKHSQVYSTADDNQSAVTIKVFQGEREMAAGNKLLGEFNLEGIPPAPRGVPQIEVTFDIDANGILHVGAKDKATGKENKITIKANSGLSDAEIDQMIKDAEANAAEDHKLRELADSRNQGDALVHSTKKALTEYGDKLDAGEKEKIEAALKSLEDVLKDTSADKAAIDAKVEELGKASQKLGEKMYADMQAQQAGAAGAAGAAEGAAHAGGAQQAADDVVDAEFKEVKKD.

Threonine 200 is modified (phosphothreonine; by autocatalysis). The tract at residues 613 to 634 is disordered; sequence QAGAAGAAGAAEGAAHAGGAQQ.

The protein belongs to the heat shock protein 70 family.

Functionally, acts as a chaperone. This is Chaperone protein DnaK from Burkholderia vietnamiensis (strain G4 / LMG 22486) (Burkholderia cepacia (strain R1808)).